Reading from the N-terminus, the 260-residue chain is Movement protein (260 aa).

Residues 230-260 (SGDTAEEAGEASSGEPHWVPEATAPRVRKAT) form a disordered region.

In terms of biological role, transports viral genome to neighboring plant cells directly through plasmosdesmata, without any budding. The movement protein allows efficient cell to cell propagation, by bypassing the host cell wall barrier. Might act by forming tubules structures that increase the size exclusion limit (SEL) of plasmodesmata, thereby allowing viral ribonucleoproteins to spread directly to neighboring cells. Binds to ssRNA. The protein is Movement protein of Groundnut rosette virus (strain MC1) (GRV).